The following is a 192-amino-acid chain: tRNA (cytidine(56)-2'-O)-methyltransferase (192 aa).

S-adenosyl-L-methionine contacts are provided by residues leucine 84 and 112–116 (GGEKV).

The protein belongs to the aTrm56 family. Homodimer.

The protein localises to the cytoplasm. It catalyses the reaction cytidine(56) in tRNA + S-adenosyl-L-methionine = 2'-O-methylcytidine(56) in tRNA + S-adenosyl-L-homocysteine + H(+). Its function is as follows. Specifically catalyzes the AdoMet-dependent 2'-O-ribose methylation of cytidine at position 56 in tRNAs. The sequence is that of tRNA (cytidine(56)-2'-O)-methyltransferase from Halobacterium salinarum (strain ATCC 700922 / JCM 11081 / NRC-1) (Halobacterium halobium).